We begin with the raw amino-acid sequence, 487 residues long: Glutamyl-tRNA(Gln) amidotransferase subunit A (487 aa).

Residues K77 and S152 each act as charge relay system in the active site. S176 acts as the Acyl-ester intermediate in catalysis.

The protein belongs to the amidase family. GatA subfamily. In terms of assembly, heterotrimer of A, B and C subunits.

The enzyme catalyses L-glutamyl-tRNA(Gln) + L-glutamine + ATP + H2O = L-glutaminyl-tRNA(Gln) + L-glutamate + ADP + phosphate + H(+). Its function is as follows. Allows the formation of correctly charged Gln-tRNA(Gln) through the transamidation of misacylated Glu-tRNA(Gln) in organisms which lack glutaminyl-tRNA synthetase. The reaction takes place in the presence of glutamine and ATP through an activated gamma-phospho-Glu-tRNA(Gln). This chain is Glutamyl-tRNA(Gln) amidotransferase subunit A, found in Lysinibacillus sphaericus (strain C3-41).